The chain runs to 154 residues: uncharacterized protein (154 aa).

A divalent metal cation is bound by residues histidine 47, histidine 127, and histidine 131. Residue tyrosine 150 is modified to Phosphotyrosine.

This sequence belongs to the DinB family. In terms of assembly, homodimer.

This is an uncharacterized protein from Bacillus subtilis (strain 168).